We begin with the raw amino-acid sequence, 1342 residues long: Putative aldehyde oxidase-like protein (1342 aa).

The segment at 1-23 is disordered; that stretch reads MSDCNSGGGERRPNARATDAPPV. One can recognise an FAD-binding PCMH-type domain in the interval 221 to 408; the sequence is ISSPREGWYC…LSIFIPHWAS (188 aa).

This sequence belongs to the xanthine dehydrogenase family.

The chain is Putative aldehyde oxidase-like protein from Oryza sativa subsp. japonica (Rice).